Reading from the N-terminus, the 514-residue chain is 2,3-bisphosphoglycerate-independent phosphoglycerate mutase (514 aa).

Mn(2+) is bound by residues aspartate 14 and serine 64. Serine 64 acts as the Phosphoserine intermediate in catalysis. Residues histidine 125, 155–156, arginine 187, arginine 193, 263–266, and lysine 336 each bind substrate; these read RD and RADR. Positions 403, 407, 444, 445, and 463 each coordinate Mn(2+).

Belongs to the BPG-independent phosphoglycerate mutase family. Monomer. Mn(2+) is required as a cofactor.

The catalysed reaction is (2R)-2-phosphoglycerate = (2R)-3-phosphoglycerate. Its pathway is carbohydrate degradation; glycolysis; pyruvate from D-glyceraldehyde 3-phosphate: step 3/5. Catalyzes the interconversion of 2-phosphoglycerate and 3-phosphoglycerate. In Shewanella baltica (strain OS195), this protein is 2,3-bisphosphoglycerate-independent phosphoglycerate mutase.